A 245-amino-acid polypeptide reads, in one-letter code: MPRYKLTIEYDGAPFCGWQLQPVLPSVQGALEAAALATCGEAVRVHGAGRTDAGVHALGQVAHLDIAKPFRADRLRDALNAHVRPYPVAVLSTEIVPDSFEARFSAIRRHYRYRIVNRRSNLALEIGKVWRVPKPLDTDAMHRAAQVLIGKHDFTTFRDTECQAASPEKTLDVLDVVRSGDCVDIITSARSYLHSQVRSMVGSLVWVGEGRWSADDLAAALAARRRSACGPVAPPDGLYLVKVDY.

Asp-52 serves as the catalytic Nucleophile. Position 111 (Tyr-111) interacts with substrate.

Belongs to the tRNA pseudouridine synthase TruA family. Homodimer.

It catalyses the reaction uridine(38/39/40) in tRNA = pseudouridine(38/39/40) in tRNA. In terms of biological role, formation of pseudouridine at positions 38, 39 and 40 in the anticodon stem and loop of transfer RNAs. This is tRNA pseudouridine synthase A from Rhodopseudomonas palustris (strain BisB5).